Here is a 240-residue protein sequence, read N- to C-terminus: Ribosomal RNA small subunit methyltransferase G (240 aa).

S-adenosyl-L-methionine is bound by residues glycine 79, phenylalanine 84, 130-131, and arginine 149; that span reads AE.

Belongs to the methyltransferase superfamily. RNA methyltransferase RsmG family.

Its subcellular location is the cytoplasm. Functionally, specifically methylates the N7 position of a guanine in 16S rRNA. In Desulforamulus reducens (strain ATCC BAA-1160 / DSM 100696 / MI-1) (Desulfotomaculum reducens), this protein is Ribosomal RNA small subunit methyltransferase G.